We begin with the raw amino-acid sequence, 238 residues long: Probable transcriptional regulatory protein VV2_1184 (238 aa).

Belongs to the TACO1 family.

It is found in the cytoplasm. The sequence is that of Probable transcriptional regulatory protein VV2_1184 from Vibrio vulnificus (strain CMCP6).